Here is a 227-residue protein sequence, read N- to C-terminus: RNA pyrophosphohydrolase (227 aa).

The Nudix hydrolase domain occupies 6-149 (GFRPNVGIIL…KRDVYQMALT (144 aa)). The short motif at 38-59 (GGIKYGETPEQAMYRELHEEIG) is the Nudix box element. The interval 165–227 (PYGTHGAHGA…PVSTTRSTDD (63 aa)) is disordered. Residues 192–201 (AQAAQQADAD) are compositionally biased toward low complexity. Over residues 217-227 (TPVSTTRSTDD) the composition is skewed to polar residues.

It belongs to the Nudix hydrolase family. RppH subfamily. Requires a divalent metal cation as cofactor.

In terms of biological role, accelerates the degradation of transcripts by removing pyrophosphate from the 5'-end of triphosphorylated RNA, leading to a more labile monophosphorylated state that can stimulate subsequent ribonuclease cleavage. In Cupriavidus taiwanensis (strain DSM 17343 / BCRC 17206 / CCUG 44338 / CIP 107171 / LMG 19424 / R1) (Ralstonia taiwanensis (strain LMG 19424)), this protein is RNA pyrophosphohydrolase.